The following is a 313-amino-acid chain: Ribosomal RNA small subunit methyltransferase H (313 aa).

S-adenosyl-L-methionine is bound by residues 35-37 (GGH), aspartate 55, phenylalanine 80, aspartate 102, and glutamine 109.

It belongs to the methyltransferase superfamily. RsmH family.

It localises to the cytoplasm. The enzyme catalyses cytidine(1402) in 16S rRNA + S-adenosyl-L-methionine = N(4)-methylcytidine(1402) in 16S rRNA + S-adenosyl-L-homocysteine + H(+). In terms of biological role, specifically methylates the N4 position of cytidine in position 1402 (C1402) of 16S rRNA. The sequence is that of Ribosomal RNA small subunit methyltransferase H from Shewanella oneidensis (strain ATCC 700550 / JCM 31522 / CIP 106686 / LMG 19005 / NCIMB 14063 / MR-1).